We begin with the raw amino-acid sequence, 308 residues long: uncharacterized protein (308 aa).

An ABC transporter domain is found at 6–234; that stretch reads LHIEGLDKKI…TEKAIIEVQP (229 aa). Position 38–45 (38–45) interacts with ATP; the sequence is GPNGSGKT.

It belongs to the ABC transporter superfamily.

This is an uncharacterized protein from Bacillus subtilis (strain 168).